The following is a 143-amino-acid chain: Transcriptional regulator MraZ (143 aa).

SpoVT-AbrB domains follow at residues 6–49 (TYNH…NEAE) and 78–121 (SDET…DLKV).

It belongs to the MraZ family. As to quaternary structure, forms oligomers.

The protein resides in the cytoplasm. Its subcellular location is the nucleoid. This is Transcriptional regulator MraZ from Spiroplasma kunkelii.